Consider the following 66-residue polypeptide: Large ribosomal subunit protein bL33c (66 aa).

The protein belongs to the bacterial ribosomal protein bL33 family.

The protein resides in the plastid. It localises to the chloroplast. The polypeptide is Large ribosomal subunit protein bL33c (Morus indica (Mulberry)).